An 880-amino-acid polypeptide reads, in one-letter code: Leucine-rich repeat-containing protein 66 (880 aa).

Residues 4-24 (LYFRVITIVIGLYFTGIMTNA) traverse the membrane as a helical segment. N-linked (GlcNAc...) asparagine glycosylation occurs at asparagine 45. LRR repeat units lie at residues 86–107 (KIKHLDLSNNLISKITLSPFAY), 110–130 (ALEVLNLSNNAIHSLSLDLLS), 149–171 (LLKVLILQRNKLSDTPKGLWKLK), 172–193 (SLQSLDLSFNGILQIGWSDFHN), 196–217 (QLENLCLKSNKIFKIPPQAFKD), and 220–241 (KLQVIDLSNNALITILPMMIIA). Residue asparagine 115 is glycosylated (N-linked (GlcNAc...) asparagine). The interval 319 to 368 (SKAERPQGGRHTGISTLGKKAKAGSGLRKKQRRLPRSVRSTRDVQAAGKK) is disordered. Over residues 337 to 354 (KKAKAGSGLRKKQRRLPR) the composition is skewed to basic residues. Residues 376 to 396 (ALAVCLSVFITFLVAFSLGAF) traverse the membrane as a helical segment. 2 disordered regions span residues 463 to 504 (PHPH…NDGA) and 679 to 746 (VTPA…SKDN). Residues 483-493 (GSSQSPGQCGD) are compositionally biased toward polar residues. The span at 697–707 (CELESDCDSDE) shows a compositional bias: acidic residues. The segment covering 709–720 (SLFTLSSISSES) has biased composition (low complexity). Serine 723 carries the post-translational modification Phosphoserine. Polar residues predominate over residues 737–746 (DESSGASKDN). N-linked (GlcNAc...) asparagine glycosylation is present at asparagine 746. Position 752 is a phosphoserine (serine 752). N-linked (GlcNAc...) asparagine glycosylation is present at asparagine 756. 2 disordered regions span residues 764-816 (GKCK…PLGD) and 855-880 (TPPCSAEVPSDPDKAAFHERDSDILK). Basic and acidic residues-rich tracts occupy residues 788–800 (THLENASDTDRSE) and 865–880 (DPDKAAFHERDSDILK).

It is found in the membrane. This Homo sapiens (Human) protein is Leucine-rich repeat-containing protein 66 (LRRC66).